We begin with the raw amino-acid sequence, 507 residues long: (6-4) photolyase (507 aa).

6,7-dimethyl-8-(1-D-ribityl)lumazine contacts are provided by residues 9-10, 32-40, and G105; these read GD and CEVMAEASY. Residues 265 to 269 and N273 each bind FAD; that span reads HSLLS. C350 is a [4Fe-4S] cluster binding site. FAD contacts are provided by residues 363–366, D397, and N406; that span reads YAHH. Positions 438, 441, and 454 each coordinate [4Fe-4S] cluster.

Belongs to the iron-sulfur bacterial cryptochrome/photolyase (FeS-BCP) family. FAD is required as a cofactor. The cofactor is 6,7-dimethyl-8-(1-D-ribityl)lumazine. Requires [4Fe-4S] cluster as cofactor.

It catalyses the reaction (6-4) photoproduct (in DNA) = 2 pyrimidine residues (in DNA).. Functionally, photolyase involved in the repair of UV-induced (6-4) lesions in DNA. Catalyzes the photoreactivation of (6-4) pyrimidine-pyrimidone photoproducts by using blue-light energy. Can repair (6-4) photoproducts in ssDNA as well as in dsDNA. This chain is (6-4) photolyase, found in Agrobacterium fabrum (strain C58 / ATCC 33970) (Agrobacterium tumefaciens (strain C58)).